Consider the following 185-residue polypeptide: Translation initiation factor IF-3 (185 aa).

This sequence belongs to the IF-3 family. As to quaternary structure, monomer.

It is found in the cytoplasm. IF-3 binds to the 30S ribosomal subunit and shifts the equilibrium between 70S ribosomes and their 50S and 30S subunits in favor of the free subunits, thus enhancing the availability of 30S subunits on which protein synthesis initiation begins. This is Translation initiation factor IF-3 from Rickettsia prowazekii (strain Madrid E).